The chain runs to 750 residues: MLSSRWWPSSWGILGLGPRSPPRGSQLCALYAFTYTGADGQQVSLAEGDRFLLLRKTNSDWWLARRLEAPSTSRPIFVPAAYMIEESIPSQSPTTVIPGQLLWTPGPKLFHGSLEELSQALPSRAQASSEQPPPLPRKMCRSVSTDNLSPSLLKPFQEGPSGRSLSQEDLPSEASASTAGPQPLMSEPPVYCNLVDLRRCPRSPPPGPACPLLQRLDAWEQHLDPNSGRCFYINSLTGCKSWKPPRRSRSETNPGSMEGTQTLKRNNDVLQPQAKGFRSDTGTPEPLDPQGSLSLSQRTSQLDPPALQAPRPLPQLLDDPHEVEKSGLLNMTKIAQGGRKLRKNWGPSWVVLTGNSLVFYREPPPTAPSSGWGPAGSRPESSVDLRGAALAHGRHLSSRRNVLHIRTIPGHEFLLQSDHETELRAWHRALRTVIERLVRWVEARREAPTGRDQGSGDRENPLELRLSGSGPAELSAGEDEEEESELVSKPLLRLSSRRSSIRGPEGTEQNRVRNKLKRLIAKRPPLQSLQERGLLRDQVFGCQLESLCQREGDTVPSFLRLCIAAVDKRGLDVDGIYRVSGNLAVVQKLRFLVDRERAVTSDGRYVFPEQPGQEGRLDLDSTEWDDIHVVTGALKLFLRELPQPLVPPLLLPHFRAALALSESEQCLSQIQELIGSMPKPNHDTLRYLLEHLCRVIAHSDKNRMTPHNLGIVFGPTLFRPEQETSDPAAHALYPGQLVQLMLTNFTSLFP.

The 67-residue stretch at 22–88 (PRGSQLCALY…PAAYMIEESI (67 aa)) folds into the SH3 domain. 2 disordered regions span residues 120–187 (ALPS…LMSE) and 242–319 (WKPP…LLDD). The segment covering 163–180 (RSLSQEDLPSEASASTAG) has biased composition (polar residues). Positions 213–247 (LQRLDAWEQHLDPNSGRCFYINSLTGCKSWKPPRR) constitute a WW domain. Composition is skewed to polar residues over residues 251 to 270 (ETNPGSMEGTQTLKRNNDVL) and 291 to 300 (GSLSLSQRTS). Positions 301–317 (QLDPPALQAPRPLPQLL) are enriched in low complexity. A PH domain is found at 322 to 435 (EVEKSGLLNM…WHRALRTVIE (114 aa)). 3 lipid binding regions span residues 342 to 345 (RKNW), 397 to 399 (SSR), and 432 to 669 (TVIE…CLSQ). The segment covering 446–462 (EAPTGRDQGSGDRENPL) has biased composition (basic and acidic residues). Residues 446–488 (EAPTGRDQGSGDRENPLELRLSGSGPAELSAGEDEEEESELVS) are disordered. Position 475 is a phosphoserine (S475). Residues 476–485 (AGEDEEEESE) are compositionally biased toward acidic residues. S500 carries the post-translational modification Phosphoserine. Residues 542 to 749 (CQLESLCQRE…LMLTNFTSLF (208 aa)) form the Rho-GAP domain.

In terms of assembly, interacts with FASLG. As to expression, predominantly expressed in peripheral blood leukocytes, spleen, and thymus.

In terms of biological role, GTPase activator for the Rho-type GTPases by converting them to an inactive GDP-bound state. Has a substantial GAP activity toward CDC42 and RAC1 and less toward RHOA. Has a role in regulating adhesion of hematopoietic cells to the extracellular matrix. Binds phosphoinositides, and has the highest affinity for phosphatidylinositol 3,4,5-trisphosphate, followed by phosphatidylinositol 3,4-bisphosphate and phosphatidylinositol 4,5-bisphosphate. This Homo sapiens (Human) protein is Rho GTPase-activating protein 9 (ARHGAP9).